A 154-amino-acid polypeptide reads, in one-letter code: Ribosome maturation factor RimP (154 aa).

This sequence belongs to the RimP family.

The protein localises to the cytoplasm. Its function is as follows. Required for maturation of 30S ribosomal subunits. In Ruthia magnifica subsp. Calyptogena magnifica, this protein is Ribosome maturation factor RimP.